A 214-amino-acid polypeptide reads, in one-letter code: Small ribosomal subunit protein eS6 (214 aa).

Belongs to the eukaryotic ribosomal protein eS6 family.

This is Small ribosomal subunit protein eS6 from Saccharolobus solfataricus (strain ATCC 35092 / DSM 1617 / JCM 11322 / P2) (Sulfolobus solfataricus).